A 158-amino-acid polypeptide reads, in one-letter code: UPF0102 protein GbCGDNIH1_0975 (158 aa).

It belongs to the UPF0102 family.

This chain is UPF0102 protein GbCGDNIH1_0975, found in Granulibacter bethesdensis (strain ATCC BAA-1260 / CGDNIH1).